Here is a 453-residue protein sequence, read N- to C-terminus: Aldehyde dehydrogenase, dimeric NADP-preferring (453 aa).

Position 2 is an N-acetylserine (S2). Residue K178 is modified to N6-acetyllysine. NAD(+) is bound at residue 188 to 193; it reads GNTAVG. K194 carries the N6-acetyllysine modification. Active-site residues include E210 and C244.

The protein belongs to the aldehyde dehydrogenase family. Homodimer.

It localises to the cytoplasm. It carries out the reaction an aldehyde + NAD(+) + H2O = a carboxylate + NADH + 2 H(+). It catalyses the reaction octanal + NAD(+) + H2O = octanoate + NADH + 2 H(+). ALDHs play a major role in the detoxification of alcohol-derived acetaldehyde. They are involved in the metabolism of corticosteroids, biogenic amines, neurotransmitters, and lipid peroxidation. Oxidizes medium and long chain aldehydes into non-toxic fatty acids. Preferentially oxidizes aromatic aldehyde substrates. Comprises about 50 percent of corneal epithelial soluble proteins. May play a role in preventing corneal damage caused by ultraviolet light. The sequence is that of Aldehyde dehydrogenase, dimeric NADP-preferring (ALDH3A1) from Canis lupus familiaris (Dog).